The chain runs to 472 residues: 3-isopropylmalate dehydratase large subunit (472 aa).

3 residues coordinate [4Fe-4S] cluster: Cys353, Cys414, and Cys417.

This sequence belongs to the aconitase/IPM isomerase family. LeuC type 1 subfamily. As to quaternary structure, heterodimer of LeuC and LeuD. It depends on [4Fe-4S] cluster as a cofactor.

The catalysed reaction is (2R,3S)-3-isopropylmalate = (2S)-2-isopropylmalate. It participates in amino-acid biosynthesis; L-leucine biosynthesis; L-leucine from 3-methyl-2-oxobutanoate: step 2/4. Its function is as follows. Catalyzes the isomerization between 2-isopropylmalate and 3-isopropylmalate, via the formation of 2-isopropylmaleate. The chain is 3-isopropylmalate dehydratase large subunit from Acinetobacter baumannii (strain ATCC 17978 / DSM 105126 / CIP 53.77 / LMG 1025 / NCDC KC755 / 5377).